A 309-amino-acid chain; its full sequence is D-alanine--D-alanine ligase (309 aa).

The ATP-grasp domain occupies lysine 106–glutamate 305. Residue valine 136–threonine 191 participates in ATP binding. Mg(2+)-binding residues include aspartate 259, glutamate 272, and asparagine 274.

The protein belongs to the D-alanine--D-alanine ligase family. The cofactor is Mg(2+). Mn(2+) serves as cofactor.

The protein localises to the cytoplasm. The enzyme catalyses 2 D-alanine + ATP = D-alanyl-D-alanine + ADP + phosphate + H(+). Its pathway is cell wall biogenesis; peptidoglycan biosynthesis. Cell wall formation. The protein is D-alanine--D-alanine ligase of Pasteurella multocida (strain Pm70).